The primary structure comprises 661 residues: Cartilage acidic protein 1 (661 aa).

Residues 1–27 (MAPSADPGMSRMLPFLLLLWFLPITEG) form the signal peptide. The stretch at 46–88 (DYDSNPTQLNYGVAVTDVDHDGDFEIVVAGYNGPNLVLKYDRA) is one FG-GAP 1; atypical repeat. An FG-GAP 2; atypical repeat occupies 105-147 (YALRDRQGNAIGVTACDIDGDGREEIYFLNTNNAFSGVATYTD). An FG-GAP 3; atypical repeat occupies 283-333 (AGVDDPHQHGRGVALADFNRDGKVDIVYGNWNGPHRLYLQMSTHGKVRFRD). An FG-GAP 4; atypical repeat occupies 395–437 (GDALEPEGRGTGGVVTDFDGDGMLDLILSHGESMAQPLSVFRG). An EGF-like domain is found at 559–605 (DTNECIQFPFVCPRDKPVCVNTYGSYRCRTNKKCSRGYEPNEDGTAC). 3 cysteine pairs are disulfide-bonded: Cys563-Cys577, Cys570-Cys586, and Cys592-Cys605. 5 O-linked (GalNAc...) threonine glycosylation sites follow: Thr608, Thr618, Thr619, Thr621, and Thr626.

In terms of processing, O-glycosylated. In terms of tissue distribution, expressed in the interterritorial matrix of articular deep zone cartilage (at protein level). Isoform 1 and isoform 2 are expressed in brain. Isoform 1 is detected in lung and chondrocytes. Detected in cartilage, bone, cultured chondrocytes and lung, and at low levels in heart. Not detected in osteoblasts.

The protein resides in the secreted. Its subcellular location is the extracellular space. The protein localises to the extracellular matrix. This chain is Cartilage acidic protein 1 (CRTAC1), found in Homo sapiens (Human).